Consider the following 168-residue polypeptide: Small ribosomal subunit protein uS5 (168 aa).

An S5 DRBM domain is found at 13 to 76 (LQEKLIAVNR…EKARRNMVTV (64 aa)).

This sequence belongs to the universal ribosomal protein uS5 family. In terms of assembly, part of the 30S ribosomal subunit. Contacts proteins S4 and S8.

Functionally, with S4 and S12 plays an important role in translational accuracy. Its function is as follows. Located at the back of the 30S subunit body where it stabilizes the conformation of the head with respect to the body. The protein is Small ribosomal subunit protein uS5 of Shewanella amazonensis (strain ATCC BAA-1098 / SB2B).